Here is a 137-residue protein sequence, read N- to C-terminus: Small ribosomal subunit protein uS12 (137 aa).

Belongs to the universal ribosomal protein uS12 family. In terms of assembly, part of the 30S ribosomal subunit. Contacts proteins S8 and S17. May interact with IF1 in the 30S initiation complex.

With S4 and S5 plays an important role in translational accuracy. Functionally, interacts with and stabilizes bases of the 16S rRNA that are involved in tRNA selection in the A site and with the mRNA backbone. Located at the interface of the 30S and 50S subunits, it traverses the body of the 30S subunit contacting proteins on the other side and probably holding the rRNA structure together. The combined cluster of proteins S8, S12 and S17 appears to hold together the shoulder and platform of the 30S subunit. The protein is Small ribosomal subunit protein uS12 of Lactiplantibacillus plantarum (strain ATCC BAA-793 / NCIMB 8826 / WCFS1) (Lactobacillus plantarum).